Reading from the N-terminus, the 143-residue chain is Putative pre-16S rRNA nuclease (143 aa).

It belongs to the YqgF nuclease family.

It is found in the cytoplasm. In terms of biological role, could be a nuclease involved in processing of the 5'-end of pre-16S rRNA. This is Putative pre-16S rRNA nuclease from Lactococcus lactis subsp. cremoris (strain MG1363).